The following is a 198-amino-acid chain: dTTP/UTP pyrophosphatase (198 aa).

D75 functions as the Proton acceptor in the catalytic mechanism.

Belongs to the Maf family. YhdE subfamily. It depends on a divalent metal cation as a cofactor.

The protein resides in the cytoplasm. The enzyme catalyses dTTP + H2O = dTMP + diphosphate + H(+). It carries out the reaction UTP + H2O = UMP + diphosphate + H(+). Nucleoside triphosphate pyrophosphatase that hydrolyzes dTTP and UTP. May have a dual role in cell division arrest and in preventing the incorporation of modified nucleotides into cellular nucleic acids. The polypeptide is dTTP/UTP pyrophosphatase (Wolbachia sp. subsp. Brugia malayi (strain TRS)).